We begin with the raw amino-acid sequence, 428 residues long: MSNNTTIPSKTATDICLTDRQMSLSVSSTEGVLIGTIIPILVLFGISGNILNLTVLLAPNLRTRSNQLLACLAVADIVSLVVILPHSMAHYETFETALWFRKFYGKYKFQIIAMTNWSIATATWLVFVICLERLIIIKYPLSVRKQAKFFTPRNVVTIIVVTTFILTSYNHVSHACAEKLFCNGTQYHVACLGIDSERWFRNEPNPNSEFMKSVVRVAPQVNAIFVVLIPVVLVIIFNVMLILTLRQRTKLFEPSKTIRGDSQFTQLQSKTEHKVTITVTAIVTCFTITQSPSAFVTFLSSYVHRDWVTLSAICTILVVLGKALNFVLFCLSSASFRQRLLMQTKQGILRKSTRTVSMVTSSTVVVDSLPESRKKSRVAMEMIERRTSASSCLVGGNRADRTHRANSSQSMIGERMPLKEFRRGTSFV.

The Extracellular segment spans residues 1-30 (MSNNTTIPSKTATDICLTDRQMSLSVSSTE). N3 and N4 each carry an N-linked (GlcNAc...) asparagine glycan. Residues 31 to 51 (GVLIGTIIPILVLFGISGNIL) traverse the membrane as a helical segment. Topologically, residues 52-67 (NLTVLLAPNLRTRSNQ) are cytoplasmic. A helical membrane pass occupies residues 68–88 (LLACLAVADIVSLVVILPHSM). The Extracellular portion of the chain corresponds to 89-110 (AHYETFETALWFRKFYGKYKFQ). Residues 111–131 (IIAMTNWSIATATWLVFVICL) form a helical membrane-spanning segment. The Cytoplasmic segment spans residues 132 to 154 (ERLIIIKYPLSVRKQAKFFTPRN). The chain crosses the membrane as a helical span at residues 155–175 (VVTIIVVTTFILTSYNHVSHA). The Extracellular portion of the chain corresponds to 176-222 (CAEKLFCNGTQYHVACLGIDSERWFRNEPNPNSEFMKSVVRVAPQVN). N-linked (GlcNAc...) asparagine glycosylation occurs at N183. A helical membrane pass occupies residues 223-243 (AIFVVLIPVVLVIIFNVMLIL). The Cytoplasmic portion of the chain corresponds to 244 to 278 (TLRQRTKLFEPSKTIRGDSQFTQLQSKTEHKVTIT). Residues 279–299 (VTAIVTCFTITQSPSAFVTFL) traverse the membrane as a helical segment. The Extracellular portion of the chain corresponds to 300–309 (SSYVHRDWVT). The chain crosses the membrane as a helical span at residues 310 to 330 (LSAICTILVVLGKALNFVLFC). Over 331–428 (LSSASFRQRL…KEFRRGTSFV (98 aa)) the chain is Cytoplasmic.

Belongs to the G-protein coupled receptor 1 family.

The protein localises to the cell membrane. The polypeptide is Putative G-protein coupled receptor F59B2.13 (Caenorhabditis elegans).